We begin with the raw amino-acid sequence, 1020 residues long: Inner tegument protein (1020 aa).

Residues 539–1020 are interaction with large tegument protein; sequence WGVRIPDRDT…EIDAIFNNTK (482 aa).

It belongs to the herpesviridae inner tegument protein family. Interacts (via C-terminus) with the large tegument protein/LTP (via N-terminus).

It localises to the virion tegument. The protein localises to the host cytoplasm. Its subcellular location is the host nucleus. It is found in the host Golgi apparatus. The protein resides in the host trans-Golgi network. Plays an essential role in cytoplasmic secondary envelopment during viral egress. Interacts with the capsid via the large tegument protein/LTP and participates in its transport to the host trans-Golgi network (TGN) where secondary envelopment occurs. Modulates tegumentation and capsid accumulation at the viral assembly complex. The protein is Inner tegument protein of Equine herpesvirus 1 (strain Ab4p) (EHV-1).